A 345-amino-acid polypeptide reads, in one-letter code: MAREHQAAILPQPGGPLSVGMRPTPKPGPNDVLIEVKAVALNPCDYYQRDYGMPPVLIYPAVLGSDTAGVVVKLGSNVTTVPGPGSRVIAFASSFYQGGSPDHGAFQTYTLAQSEGVIPLPDSLSFEEGAVFPLAVLTALTAWTTIGMRLDTRYSPVDQQAVLIWGASSSVGSFAVQSAKTLGFTIYATASPEHHDLVKTLGADAVFDYKAGDVVSQIVSAVRRDGVQLHTAHCVVDGALQPTLDILKETKGDAPAKVAHSPVLPEGHPTLDNTQIIFNFPSLDEVARSKHMKEVFHGWLNLSLQTGEIVSSPNIQVENGGLSAVHAALDKLKNGVSGTKIVVAL.

The disordered stretch occupies residues 1–26 (MAREHQAAILPQPGGPLSVGMRPTPK). Residues 44–49 (CDYYQR), 168–171 (SSSV), 191–194 (SPEH), Y209, and 244–245 (LD) contribute to the NADP(+) site.

It belongs to the zinc-containing alcohol dehydrogenase family.

The protein operates within secondary metabolite biosynthesis; terpenoid biosynthesis. Trans-enoyl reductase; part of the gene cluster that mediates the biosynthesis of talaronoid C, a fusicoccane diterpenoid with an unprecedented tricyclic 5/8/6 ring system. The first step in the pathway is performed by the fusicoccadiene synthase tndC that possesses both prenyl transferase and terpene cyclase activity, converting isopentenyl diphosphate and dimethylallyl diphosphate into geranylgeranyl diphosphate (GGDP) and further converting GGDP into talarodiene, a precursor for talaronoid C. The remaining enzymes from the cluster include the cytochrome P450 monooxygenase tndB, the aldehyde reductase tndE and the alcohol dehydrogenase tndF that are involved in the conversion of talarodiene into talaronoid C. The sequence is that of Trans-enoyl reductase tndF from Aspergillus flavipes.